The primary structure comprises 82 residues: uncharacterized protein (82 aa).

The 82-residue stretch at 1 to 82 (MKIHLIRHNT…HVESDIEIDL (82 aa)) folds into the 2Fe-2S ferredoxin-type domain. [2Fe-2S] cluster contacts are provided by Cys35, Cys40, Cys43, and Cys72.

Requires [2Fe-2S] cluster as cofactor.

This is an uncharacterized protein from Haemophilus influenzae (strain ATCC 51907 / DSM 11121 / KW20 / Rd).